The following is a 225-amino-acid chain: Guanylate kinase (225 aa).

The region spanning 20 to 198 is the Guanylate kinase-like domain; it reads GNLFMVVAPS…ALSELQCLVA (179 aa). 27-34 contributes to the ATP binding site; that stretch reads APSGAGKS.

The protein belongs to the guanylate kinase family.

It localises to the cytoplasm. It carries out the reaction GMP + ATP = GDP + ADP. Essential for recycling GMP and indirectly, cGMP. The protein is Guanylate kinase of Paraburkholderia xenovorans (strain LB400).